Consider the following 396-residue polypeptide: Alpha-galactosidase 2 (396 aa).

The N-terminal stretch at 1-25 is a signal peptide; that stretch reads MVLLSFSLRFIAFTLTITLTQIADG. Intrachain disulfides connect C52/C84 and C132/C163. N55 is a glycosylation site (N-linked (GlcNAc...) asparagine). Substrate is bound by residues 82–83 and K159; that span reads DD. The active-site Nucleophile is the D161. Residues 194–198, R212, and D216 each bind substrate; that span reads EWGQE. The active-site Proton donor is D216. N-linked (GlcNAc...) asparagine glycosylation is found at N343 and N354.

It belongs to the glycosyl hydrolase 27 family. In terms of assembly, homodimer.

Its subcellular location is the secreted. The protein resides in the cell wall. The protein localises to the extracellular space. It localises to the apoplast. It catalyses the reaction Hydrolysis of terminal, non-reducing alpha-D-galactose residues in alpha-D-galactosides, including galactose oligosaccharides, galactomannans and galactolipids.. May regulate leaf (and possibly other organ) development by functioning in cell wall loosening and cell wall expansion. The sequence is that of Alpha-galactosidase 2 from Arabidopsis thaliana (Mouse-ear cress).